The following is a 1182-amino-acid chain: MYMKITKIDGVSHYKKQDKGILKKKWKDLDERKQREKIEARYNKQIESKIYKEFFRLKNKKRIEKEEDQNIKSLYFFIKELYLNEKNEEWELKNINLEILDDKERVIKGYKFKEDVYFFKEGYKEYYLRILFNNLIEKVQNENREKVRKNKEFLDLKEIFKKYKNRKIDLLLKSINNNKINLEYKKENVNEEIYGINPTNDREMTFYELLKEIIEKKDEQKSILEEKLDNFDITNFLENIEKIFNEETEINIIKGKVLNELREYIKEKEENNSDNKLKQIYNLELKKYIENNFSYKKQKSKSKNGKNDYLYLNFLKKIMFIEEVDEKKEINKEKFKNKINSNFKNLFVQHILDYGKLLYYKENDEYIKNTGQLETKDLEYIKTKETLIRKMAVLVSFAANSYYNLFGRVSGDILGTEVVKSSKTNVIKVGSHIFKEKMLNYFFDFEIFDANKIVEILESISYSIYNVRNGVGHFNKLILGKYKKKDINTNKRIEEDLNNNEEIKGYFIKKRGEIERKVKEKFLSNNLQYYYSKEKIENYFEVYEFEILKRKIPFAPNFKRIIKKGEDLFNNKNNKKYEYFKNFDKNSAEEKKEFLKTRNFLLKELYYNNFYKEFLSKKEEFEKIVLEVKEEKKSRGNINNKKSGVSFQSIDDYDTKINISDYIASIHKKEMERVEKYNEEKQKDTAKYIRDFVEEIFLTGFINYLEKDKRLHFLKEEFSILCNNNNNVVDFNININEEKIKEFLKENDSKTLNLYLFFNMIDSKRISEFRNELVKYKQFTKKRLDEEKEFLGIKIELYETLIEFVILTREKLDTKKSEEIDAWLVDKLYVKDSNEYKEYEEILKLFVDEKILSSKEAPYYATDNKTPILLSNFEKTRKYGTQSFLSEIQSNYKYSKVEKENIEDYNKKEEIEQKKKSNIEKLQDLKVELHKKWEQNKITEKEIEKYNNTTRKINEYNYLKNKEELQNVYLLHEMLSDLLARNVAFFNKWERDFKFIVIAIKQFLRENDKEKVNEFLNPPDNSKGKKVYFSVSKYKNTVENIDGIHKNFMNLIFLNNKFMNRKIDKMNCAIWVYFRNYIAHFLHLHTKNEKISLISQMNLLIKLFSYDKKVQNHILKSTKTLLEKYNIQINFEISNDKNEVFKYKIKNRLYSKKGKMLGKNNKFEILENEFLENVKAMLEYSE.

A coiled-coil region spans residues 132–279 (FNNLIEKVQN…ENNSDNKLKQ (148 aa)). Residues 366–508 (YIKNTGQLET…NNEEIKGYFI (143 aa)) are HEPN-like fold 1. The stretch at 896-955 (KVEKENIEDYNKKEEIEQKKKSNIEKLQDLKVELHKKWEQNKITEKEIEKYNNTTRKINE) forms a coiled coil. The tract at residues 965–1120 (LQNVYLLHEM…QNHILKSTKT (156 aa)) is HEPN-like fold 2.

This sequence belongs to the CRISPR-associated endoribonuclease Cas13a family. It depends on a divalent metal cation as a cofactor.

Its activity is regulated as follows. Target RNA acts as an activator for non-specific ssRNA degradation. CRISPR (clustered regularly interspaced short palindromic repeat), is an adaptive immune system that provides protection against mobile genetic elements (viruses, transposable elements and conjugative plasmids). CRISPR clusters contain sequences complementary to antecedent mobile elements and target invading nucleic acids. Unlike many single-component effectors, this CRISPR-Cas system targets RNA. CRISPR clusters are transcribed from pre-CRISPR RNA (crRNA) and processed into crRNA by this protein. Cleaves linear target ssRNA in a pre-crRNA-dependent fashion, preferentially before U residues. Binding a viable target RNA target activates this protein for non-specific RNA degradation in vitro (called collateral RNA degradation), which is fairly sensitive as it requires picomolar levels of viable target RNA. The protein is CRISPR-associated endoribonuclease Cas13a of Leptotrichia wadei (strain F0279).